Consider the following 714-residue polypeptide: Fimbrin-3 (714 aa).

In terms of domain architecture, EF-hand spans 7-55 (VIVSDPWLQSQLTQVELRSLNSKFVALKNQSGKVTLEDLPSVLVKVKSL). 4 Calponin-homology (CH) domains span residues 124–241 (QSEK…KIQL), 269–372 (LPPE…HERN), 393–499 (CRDE…RTHM), and 514–622 (DMTD…YWSL). Actin-binding stretches follow at residues 124–372 (QSEK…HERN) and 393–622 (CRDE…YWSL). Over residues 628 to 662 (SSESSSSSSDSSSTHSTTTTCTSTCTSTDASPAPS) the composition is skewed to low complexity. The interval 628 to 694 (SSESSSSSSD…NEVSSLTIEE (67 aa)) is disordered. A compositionally biased stretch (polar residues) spans 670 to 680 (SSLNGEVSSLT). A compositionally biased stretch (acidic residues) spans 681–694 (IEEDNEVSSLTIEE).

Interacts with F-actin.

Its subcellular location is the cytoplasm. It is found in the cytoskeleton. Its function is as follows. Cross-links actin filaments (F-actin). Stabilizes and prevents F-actin depolymerization mediated by profilin. May regulate actin cytoarchitecture, cell cycle, cell division, cell elongation and cytoplasmic tractus. The chain is Fimbrin-3 from Arabidopsis thaliana (Mouse-ear cress).